The primary structure comprises 427 residues: Homogentisate 1,2-dioxygenase (427 aa).

His-285 functions as the Proton acceptor in the catalytic mechanism. His-328 and Glu-334 together coordinate Fe cation. Residues Tyr-343 and His-364 each contribute to the homogentisate site. His-364 contributes to the Fe cation binding site.

This sequence belongs to the homogentisate dioxygenase family. In terms of assembly, hexamer; dimer of trimers. Fe cation is required as a cofactor.

It carries out the reaction homogentisate + O2 = 4-maleylacetoacetate + H(+). The protein operates within amino-acid degradation; L-phenylalanine degradation; acetoacetate and fumarate from L-phenylalanine: step 4/6. Involved in the catabolism of homogentisate (2,5-dihydroxyphenylacetate or 2,5-OH-PhAc), a central intermediate in the degradation of phenylalanine and tyrosine. Catalyzes the oxidative ring cleavage of the aromatic ring of homogentisate to yield maleylacetoacetate. In Caulobacter sp. (strain K31), this protein is Homogentisate 1,2-dioxygenase.